A 184-amino-acid chain; its full sequence is MKNVTDSFVSLGHWPSAGSFGFNTDILATNLINLSVVLGVLIFFGKGVLSDLLDNRKQRILNTIRNSEELRGGAIEQLEKARSRLRKVESEAEQFRVNGYSEIEREKLNLINSTYKTLEQLENYKNETIQFEQQRAINQVRQRVFQQALRGALGTLNSCLNNELHLRTISANIGMLGTMKEITD.

A helical transmembrane segment spans residues 27 to 49 (LATNLINLSVVLGVLIFFGKGVL).

This sequence belongs to the ATPase B chain family. F-type ATPases have 2 components, F(1) - the catalytic core - and F(0) - the membrane proton channel. F(1) has five subunits: alpha(3), beta(3), gamma(1), delta(1), epsilon(1). F(0) has four main subunits: a(1), b(1), b'(1) and c(10-14). The alpha and beta chains form an alternating ring which encloses part of the gamma chain. F(1) is attached to F(0) by a central stalk formed by the gamma and epsilon chains, while a peripheral stalk is formed by the delta, b and b' chains.

It localises to the plastid. The protein localises to the chloroplast thylakoid membrane. Its function is as follows. F(1)F(0) ATP synthase produces ATP from ADP in the presence of a proton or sodium gradient. F-type ATPases consist of two structural domains, F(1) containing the extramembraneous catalytic core and F(0) containing the membrane proton channel, linked together by a central stalk and a peripheral stalk. During catalysis, ATP synthesis in the catalytic domain of F(1) is coupled via a rotary mechanism of the central stalk subunits to proton translocation. Functionally, component of the F(0) channel, it forms part of the peripheral stalk, linking F(1) to F(0). The polypeptide is ATP synthase subunit b, chloroplastic (Nicotiana tabacum (Common tobacco)).